Reading from the N-terminus, the 128-residue chain is Large ribosomal subunit protein uL24 (128 aa).

Positions 105-128 (KAKSRQVGKEKGKYKEETIEKMQE) are disordered.

It belongs to the universal ribosomal protein uL24 family. In terms of assembly, component of the large ribosomal subunit.

The protein localises to the cytoplasm. In terms of biological role, component of the large ribosomal subunit. The ribosome is a large ribonucleoprotein complex responsible for the synthesis of proteins in the cell. This chain is Large ribosomal subunit protein uL24 (RPL26), found in Gallus gallus (Chicken).